Here is a 151-residue protein sequence, read N- to C-terminus: MKVVFLKDVPGRGKTGDIKEVNDGYARNYLIPNKLAMPASAAVKSEIAAKQAAEERRKAKAEAEMVELAKNLDGAKVNLKAKTGAKDKLYGQITTTVIAAEIEKQTGKTIDKRKLELAEPIRQLGNYEVVIRFNKDLSSKINLAVTAEENT.

It belongs to the bacterial ribosomal protein bL9 family.

In terms of biological role, binds to the 23S rRNA. The protein is Large ribosomal subunit protein bL9 of Dehalococcoides mccartyi (strain ATCC BAA-2100 / JCM 16839 / KCTC 5957 / BAV1).